The following is a 409-amino-acid chain: ORC1-type DNA replication protein 1 (409 aa).

ATP-binding positions include 63–67 (TGKTA), Tyr206, and Arg218.

It belongs to the CDC6/cdc18 family.

In terms of biological role, involved in regulation of DNA replication. This Archaeoglobus fulgidus (strain ATCC 49558 / DSM 4304 / JCM 9628 / NBRC 100126 / VC-16) protein is ORC1-type DNA replication protein 1 (cdc6-1).